Consider the following 188-residue polypeptide: GMP synthase [glutamine-hydrolyzing] subunit A (188 aa).

The Glutamine amidotransferase type-1 domain occupies 1-188 (MIVIMDNGGQ…RNFAELCGEL (188 aa)). Cysteine 78 functions as the Nucleophile in the catalytic mechanism. Active-site residues include histidine 165 and glutamate 167.

Heterodimer composed of a glutamine amidotransferase subunit (A) and a GMP-binding subunit (B).

The catalysed reaction is XMP + L-glutamine + ATP + H2O = GMP + L-glutamate + AMP + diphosphate + 2 H(+). It functions in the pathway purine metabolism; GMP biosynthesis; GMP from XMP (L-Gln route): step 1/1. Functionally, catalyzes the synthesis of GMP from XMP. This is GMP synthase [glutamine-hydrolyzing] subunit A from Thermococcus kodakarensis (strain ATCC BAA-918 / JCM 12380 / KOD1) (Pyrococcus kodakaraensis (strain KOD1)).